A 428-amino-acid polypeptide reads, in one-letter code: GTPase Obg (428 aa).

The region spanning 1–158 (MFVDQTKIDV…RTLRLELKVL (158 aa)) is the Obg domain. The OBG-type G domain occupies 159-328 (ADVGLVGFPS…LMGKTADLVE (170 aa)). GTP contacts are provided by residues 165-172 (GFPSVGKS), 190-194 (FTTLT), 212-215 (DLPG), 282-285 (TQMD), and 309-311 (SSV). 2 residues coordinate Mg(2+): S172 and T192. Positions 350–428 (YKKPEDEGFK…IADFTFEFVD (79 aa)) constitute an OCT domain.

Belongs to the TRAFAC class OBG-HflX-like GTPase superfamily. OBG GTPase family. Monomer. Requires Mg(2+) as cofactor.

Its subcellular location is the cytoplasm. In terms of biological role, an essential GTPase which binds GTP, GDP and possibly (p)ppGpp with moderate affinity, with high nucleotide exchange rates and a fairly low GTP hydrolysis rate. Plays a role in control of the cell cycle, stress response, ribosome biogenesis and in those bacteria that undergo differentiation, in morphogenesis control. The protein is GTPase Obg of Lactobacillus johnsonii (strain CNCM I-12250 / La1 / NCC 533).